Here is an 86-residue protein sequence, read N- to C-terminus: MKSIVFVALFGLALLAVVCSASEDAHKELLKEVVRAMVVDKTDAVQAEERECRWYLGGCSQDGDCCKHLQCHSNYEWCIWDGTSSK.

A signal peptide spans 1–21 (MKSIVFVALFGLALLAVVCSA). Residues 22–50 (SEDAHKELLKEVVRAMVVDKTDAVQAEER) constitute a propeptide that is removed on maturation. Intrachain disulfides connect C52–C66, C59–C71, and C65–C78.

This sequence belongs to the neurotoxin 10 (Hwtx-1) family. 17 (Hntx-9) subfamily. In terms of tissue distribution, expressed by the venom gland.

The protein localises to the secreted. Its function is as follows. Ion channel inhibitor. The protein is Omega-theraphotoxin-Hhn1c of Cyriopagopus hainanus (Chinese bird spider).